A 678-amino-acid chain; its full sequence is MNIRMGTKGKRPLRSLTPRDKIHAIQRIHDGESKASVARDIGVPESTLRGWCKNEDKLRFMSRQSATDNLCADALGDKMDGGGGGGGGAGGGGLLGPPEKRQRLDGALPLNFSNKLKFDELAFKRSPLNGLDYSTNKNLADLGYNGLPVDYAAFNGGVKAKVFGADINRPAADPSLNAISPLSSLTHLSGLTGISQSPLAISFNELTTNLNLLAQLNPGLAAMSGLNSFPAGAGNLRTPKPSGQTPLQVQSPRSDSGDRSAQGLSVKNWAKQKPGEGQGSLNLSIKNEGKGGDIKSPSPSIAPSQMGGPMTLSNLAEDPLLYWLKSQQTMLGLNPLYPPTIPMGVTSPPIRSSTPQHMSQLAQTPPIPSAPLTPSSTPSGSLDEKNAAWYNWCKAFGASLHTLNPNAATLAALQANQLQQQVATTAAEGGSMGDPSNILYSHLTKETETPSVRSLSSNEQNPEADEATETDLDGEVEPEASGKPEDLSAAGKVMTPSQSPIAHSSGSRSPEPKAKTKTPETTNSTSECKKILDNMLFKMGGMEATGPLMPEQGSSESEGSFQDTSNPHTNNNDVSASNNNNNNNSNKTDEEEKAKYLDCTADEDIEAIRHGEKFLQWLENCSNPRVTAVQLMQLRFLIAAIKSGNETPMIEKSALPEDSEEHAAEEEGSGRGKSRRRK.

The 52-residue stretch at T7–L58 folds into the HTH psq-type domain. Positions K34–N54 form a DNA-binding region, H-T-H motif. Disordered regions lie at residues G232–M310, G344–S381, K445–C528, G541–E592, and N645–K678. 2 stretches are compositionally biased toward polar residues: residues P241 to S254 and P349 to Q363. 2 positions are modified to phosphoserine: S251 and S254. The segment covering L372 to S381 has biased composition (low complexity). The span at T449–N461 shows a compositional bias: polar residues. The span at P462–P478 shows a compositional bias: acidic residues. The segment covering T495 to R508 has biased composition (polar residues). Low complexity predominate over residues N570–N586. Residues E657–E667 are compositionally biased toward acidic residues.

As to quaternary structure, homomers. Interacts with itself, danr, ey and dac to form a complex (or complexes) containing the RD factors. As to expression, coexpressed with danr in the presumptive distal antenna, but not in the leg imaginal disk. Both proteins are also expressed in the brain and the eye region of the eye-antenna disk. First detected in early L3 eye disks in cells surrounding the newly initiated MF. Levels are uniform and high anterior to the furrow, lower levels within and posterior to the furrow. Limited expression is seen in small groups of cells in leg and wing. These appear in the location of prominent sense organ progenitors at relatively late stages of disk development.

The protein resides in the nucleus. Its function is as follows. Probable transcription factor with a role in the retinal determination (RD) network. Regulates ato expression and is required for normal R8 induction and differentiation. Danr appears to repress Dan expression, but Dan is required for Danr expression anterior to the morphogenetic furrow (MF). Dan and Danr lie downstream of so and require dac function for highest levels of expression. Contributes to differentiation of antenna-specific characteristics; effector gene that acts downstream of homothorax (hth), Distal-less (Dll), cut (ct) and spineless (ss) genes to control differentiation of distal antennal structures. In Drosophila melanogaster (Fruit fly), this protein is Protein distal antenna.